The sequence spans 467 residues: Cysteine--tRNA ligase (467 aa).

Residue cysteine 29 participates in Zn(2+) binding. Residues 31-41 (PTVYNYVHIGN) carry the 'HIGH' region motif. Residues cysteine 209, histidine 234, and glutamate 238 each coordinate Zn(2+). The 'KMSKS' region signature appears at 267–271 (KMSKS). Lysine 270 is a binding site for ATP.

This sequence belongs to the class-I aminoacyl-tRNA synthetase family. In terms of assembly, monomer. Zn(2+) serves as cofactor.

The protein localises to the cytoplasm. The catalysed reaction is tRNA(Cys) + L-cysteine + ATP = L-cysteinyl-tRNA(Cys) + AMP + diphosphate. This is Cysteine--tRNA ligase from Xylella fastidiosa (strain Temecula1 / ATCC 700964).